Reading from the N-terminus, the 238-residue chain is Androgen-induced gene 1 protein (238 aa).

The Cytoplasmic segment spans residues 1–12 (MALVPCQVLRMA). Residues 13 to 30 (ILLSYCSILCNYKAIEMP) traverse the membrane as a helical segment. Residues 31-44 (SHQTYGGSWKFLTF) are Extracellular-facing. A helical transmembrane segment spans residues 45–67 (IDLVIQAVFFGICVLTDLSSLLT). The Cytoplasmic segment spans residues 68–87 (RGSGNQEQERQLKKLISLRD). The helical transmembrane segment at 88–110 (WMLAVLAFPVGVFVVAVFWIIYA) threads the bilayer. The Extracellular segment spans residues 111–124 (YDREMIYPKLLDNF). Residues 125–144 (IPGWLNHGMHTTVLPFILIE) form a helical membrane-spanning segment. Topologically, residues 145–156 (MRTSHHQYPSRS) are cytoplasmic. Residues 157–179 (SGLTAICTFSVGYILWVCWVHHV) traverse the membrane as a helical segment. Residues 180–193 (TGMWVYPFLEHIGP) are Extracellular-facing. The helical transmembrane segment at 194–216 (GARIIFFGSTTILMNFLYLLGEV) threads the bilayer. Residues 217 to 238 (LNNYIWDTQKSMEEEKEKPKLE) lie on the Cytoplasmic side of the membrane.

The protein belongs to the AIG1 family. Highly expressed in heart, ovary, testis, liver, and kidney, at lower levels in spleen, prostate, brain, skeletal muscle, pancreas, small intestine and colon, and undetected in peripheral blood leukocytes, thymus, lung and placenta. AIG1 expression is higher in hair follicles from males than from females.

Its subcellular location is the cell membrane. It catalyses the reaction 9-hexadecanoyloxy-octadecanoate + H2O = 9-hydroxy-octadecanoate + hexadecanoate + H(+). The enzyme catalyses 12-hexadecanoyloxy-octadecanoate + H2O = 12-hydroxyoctadecanoate + hexadecanoate + H(+). It carries out the reaction 9-(9Z-hexadecenoyloxy)-octadecanoate + H2O = (9Z)-hexadecenoate + 9-hydroxy-octadecanoate + H(+). The catalysed reaction is 12-(9Z-hexadecenoyloxy)-octadecanoate + H2O = 12-hydroxyoctadecanoate + (9Z)-hexadecenoate + H(+). It catalyses the reaction 13-(9Z-hexadecenoyloxy)-octadecanoate + H2O = 13-hydroxy-octadecanoate + (9Z)-hexadecenoate + H(+). The enzyme catalyses 9-octadecanoyloxy-octadecanoate + H2O = 9-hydroxy-octadecanoate + octadecanoate + H(+). It carries out the reaction 12-octadecanoyloxy-octadecanoate + H2O = 12-hydroxyoctadecanoate + octadecanoate + H(+). The catalysed reaction is 13-octadecanoyloxy-octadecanoate + H2O = 13-hydroxy-octadecanoate + octadecanoate + H(+). It catalyses the reaction 9-(9Z-octadecenoyloxy)-octadecanoate + H2O = 9-hydroxy-octadecanoate + (9Z)-octadecenoate + H(+). The enzyme catalyses 12-(9Z-octadecenoyloxy)-octadecanoate + H2O = 12-hydroxyoctadecanoate + (9Z)-octadecenoate + H(+). It carries out the reaction 13-(9Z-octadecenoyloxy)-octadecanoate + H2O = 13-hydroxy-octadecanoate + (9Z)-octadecenoate + H(+). The catalysed reaction is 5-(9Z-hexadecenoyloxy)-octadecanoate + H2O = 5-hydroxy-octadecanoate + (9Z)-hexadecenoate + H(+). Its activity is regulated as follows. Inhibited by N-hydroxyhydantoin carbamate JJH260 and beta-lactone KC01. Its function is as follows. Hydrolyzes bioactive fatty-acid esters of hydroxy-fatty acids (FAHFAs), but not other major classes of lipids. Show a preference for FAHFAs with branching distal from the carboxylate head group of the lipids. This is Androgen-induced gene 1 protein (AIG1) from Homo sapiens (Human).